The primary structure comprises 421 residues: ATP-dependent RNA helicase RhlB (421 aa).

The Q motif motif lies at 9–37; the sequence is QKFSDFALHPQVVEALEKKGFYNCTPIQA. The region spanning 40-219 is the Helicase ATP-binding domain; the sequence is LPLTLAGRDV…FEQMNNAEYV (180 aa). 53–60 lines the ATP pocket; the sequence is AQTGTGKT. Residues 165–168 carry the DEAD box motif; the sequence is DEAD. The 146-residue stretch at 245–390 folds into the Helicase C-terminal domain; that stretch reads RLLQTLIEEE…VSKYNPEALM (146 aa). The tract at residues 396 to 421 is disordered; the sequence is PLRLTRSRPGNGPRRAGAPRNRRRSG. The segment covering 402–414 has biased composition (low complexity); that stretch reads SRPGNGPRRAGAP.

Belongs to the DEAD box helicase family. RhlB subfamily. In terms of assembly, component of the RNA degradosome, which is a multiprotein complex involved in RNA processing and mRNA degradation.

The protein resides in the cytoplasm. It catalyses the reaction ATP + H2O = ADP + phosphate + H(+). Its function is as follows. DEAD-box RNA helicase involved in RNA degradation. Has RNA-dependent ATPase activity and unwinds double-stranded RNA. This Salmonella arizonae (strain ATCC BAA-731 / CDC346-86 / RSK2980) protein is ATP-dependent RNA helicase RhlB.